Consider the following 290-residue polypeptide: Probable endonuclease 4 (290 aa).

Histidine 69, histidine 109, glutamate 145, aspartate 179, histidine 182, histidine 216, aspartate 229, histidine 231, and glutamate 261 together coordinate Zn(2+).

The protein belongs to the AP endonuclease 2 family. The cofactor is Zn(2+).

It catalyses the reaction Endonucleolytic cleavage to 5'-phosphooligonucleotide end-products.. Its function is as follows. Endonuclease IV plays a role in DNA repair. It cleaves phosphodiester bonds at apurinic or apyrimidinic (AP) sites, generating a 3'-hydroxyl group and a 5'-terminal sugar phosphate. The protein is Probable endonuclease 4 of Chlorobium limicola (strain DSM 245 / NBRC 103803 / 6330).